Here is a 515-residue protein sequence, read N- to C-terminus: 2,3-bisphosphoglycerate-independent phosphoglycerate mutase (515 aa).

D17 and S67 together coordinate Mn(2+). S67 acts as the Phosphoserine intermediate in catalysis. Substrate-binding positions include H128, 157-158, R190, R196, 262-265, and K336; these read RD and RADR. Residues D403, H407, D444, H445, and H463 each coordinate Mn(2+).

This sequence belongs to the BPG-independent phosphoglycerate mutase family. Monomer. Requires Mn(2+) as cofactor.

It catalyses the reaction (2R)-2-phosphoglycerate = (2R)-3-phosphoglycerate. Its pathway is carbohydrate degradation; glycolysis; pyruvate from D-glyceraldehyde 3-phosphate: step 3/5. Its function is as follows. Catalyzes the interconversion of 2-phosphoglycerate and 3-phosphoglycerate. The chain is 2,3-bisphosphoglycerate-independent phosphoglycerate mutase from Acinetobacter baylyi (strain ATCC 33305 / BD413 / ADP1).